Here is a 413-residue protein sequence, read N- to C-terminus: Protein arginine N-methyltransferase 2 (413 aa).

2 disordered regions span residues 65–85 (DDEEPNGVQTNGEQGDEQKSV) and 148–178 (ELEDDDEEEEEGQEEQTGTEEVEVEGESAPQ). Acidic residues predominate over residues 148–173 (ELEDDDEEEEEGQEEQTGTEEVEVEG). The region spanning 192 to 413 (TGPDVTNSRY…YRLPLCKYMD (222 aa)) is the RMT2 domain. Residues Tyr201, Met230, 250 to 255 (HGMGIV), 271 to 273 (EAH), 298 to 299 (WQ), and Asp318 each bind S-adenosyl-L-methionine.

It belongs to the class I-like SAM-binding methyltransferase superfamily. RMT2 methyltransferase family. In terms of assembly, monomer.

Its subcellular location is the cytoplasm. The protein localises to the nucleus. Functionally, S-adenosyl-L-methionine-dependent protein-arginine N-methyltransferase that methylates the delta-nitrogen atom of arginine residues to form N5-methylarginine (type IV) in target proteins. Monomethylates ribosomal protein L12. The protein is Protein arginine N-methyltransferase 2 of Aspergillus oryzae (strain ATCC 42149 / RIB 40) (Yellow koji mold).